We begin with the raw amino-acid sequence, 430 residues long: Serine--tRNA ligase (430 aa).

237-239 (TAE) is a binding site for L-serine. 268 to 270 (RSE) is an ATP binding site. Residue Glu-291 participates in L-serine binding. 355–358 (EISS) lines the ATP pocket. L-serine is bound at residue Ser-391.

Belongs to the class-II aminoacyl-tRNA synthetase family. Type-1 seryl-tRNA synthetase subfamily. As to quaternary structure, homodimer. The tRNA molecule binds across the dimer.

The protein localises to the cytoplasm. The catalysed reaction is tRNA(Ser) + L-serine + ATP = L-seryl-tRNA(Ser) + AMP + diphosphate + H(+). It carries out the reaction tRNA(Sec) + L-serine + ATP = L-seryl-tRNA(Sec) + AMP + diphosphate + H(+). Its pathway is aminoacyl-tRNA biosynthesis; selenocysteinyl-tRNA(Sec) biosynthesis; L-seryl-tRNA(Sec) from L-serine and tRNA(Sec): step 1/1. Catalyzes the attachment of serine to tRNA(Ser). Is also able to aminoacylate tRNA(Sec) with serine, to form the misacylated tRNA L-seryl-tRNA(Sec), which will be further converted into selenocysteinyl-tRNA(Sec). The sequence is that of Serine--tRNA ligase from Klebsiella pneumoniae subsp. pneumoniae (strain ATCC 700721 / MGH 78578).